The sequence spans 401 residues: Elongation factor Tu (401 aa).

In terms of domain architecture, tr-type G spans 10–211 (KPHLNVGTIG…ALDTFVPNPK (202 aa)). The interval 19 to 26 (GHVDHGKT) is G1. 19 to 26 (GHVDHGKT) contacts GTP. A Mg(2+)-binding site is contributed by T26. The G2 stretch occupies residues 62–66 (GITIA). The G3 stretch occupies residues 83–86 (DCPG). Residues 83 to 87 (DCPGH) and 138 to 141 (NKAD) contribute to the GTP site. Residues 138-141 (NKAD) form a G4 region. Residues 179–181 (SAV) form a G5 region.

The protein belongs to the TRAFAC class translation factor GTPase superfamily. Classic translation factor GTPase family. EF-Tu/EF-1A subfamily. As to quaternary structure, monomer.

It is found in the cytoplasm. The catalysed reaction is GTP + H2O = GDP + phosphate + H(+). GTP hydrolase that promotes the GTP-dependent binding of aminoacyl-tRNA to the A-site of ribosomes during protein biosynthesis. In Leptospira borgpetersenii serovar Hardjo-bovis (strain JB197), this protein is Elongation factor Tu.